The following is a 495-amino-acid chain: DNA double-strand break repair helicase HerA (495 aa).

ATP contacts are provided by residues R141, 150-155 (GSGKSN), and 458-459 (KI).

Belongs to the HerA family. As to quaternary structure, forms a hexamer or a heptamer. Interacts with Mre11.

The catalysed reaction is Couples ATP hydrolysis with the unwinding of duplex DNA at the replication fork by translocating in the 5'-3' direction. This creates two antiparallel DNA single strands (ssDNA). The leading ssDNA polymer is the template for DNA polymerase III holoenzyme which synthesizes a continuous strand.. It catalyses the reaction ATP + H2O = ADP + phosphate + H(+). The enzyme catalyses Couples ATP hydrolysis with the unwinding of duplex DNA by translocating in the 3'-5' direction.. ATPase activity is slightly stimulated by either circular single- or double-stranded (ds)DNA with a weak preference for dsDNA. Helicase activity is stimulated by Mre11. Involved in DNA double-strand break (DSB) repair. Probably acts with NurA to stimulate resection of the 5' strand and produce the long 3' single-strand that is required for RadA loading. Has DNA-dependent ATPase activity and bidirectional DNA helicase activity. Loads on either a 3' or a 5' DNA tail for subsequent DNA unwinding. Can also unwind blunt-ended dsDNA, Holliday junction and splayed-arm DNA. The chain is DNA double-strand break repair helicase HerA from Sulfurisphaera tokodaii (strain DSM 16993 / JCM 10545 / NBRC 100140 / 7) (Sulfolobus tokodaii).